A 321-amino-acid polypeptide reads, in one-letter code: Sideroflexin-1-3 (321 aa).

5 helical membrane-spanning segments follow: residues 101–121 (IITG…FWQW), 146–168 (LVTS…NHAV), 174–194 (LLGR…NIPC), 220–240 (AAVV…IPGM), and 266–286 (IQTL…CAFF).

This sequence belongs to the sideroflexin family.

The protein resides in the mitochondrion membrane. Its function is as follows. Mitochondrial amino-acid transporter that mediates transport of serine into mitochondria. In Drosophila melanogaster (Fruit fly), this protein is Sideroflexin-1-3.